Consider the following 101-residue polypeptide: Translation initiation factor IF-1, chloroplastic (101 aa).

Polar residues predominate over residues 1-10; it reads MNQLKKSFSP. The tract at residues 1 to 35 is disordered; it reads MNQLKKSFSPTEGKKDQNNLINDPQKNKQKKQKKL. Residues 26 to 101 form the S1-like domain; the sequence is KNKQKKQKKL…TKGRITYRHR (76 aa).

Belongs to the IF-1 family. Component of the 30S ribosomal translation pre-initiation complex which assembles on the 30S ribosome in the order IF-2 and IF-3, IF-1 and N-formylmethionyl-tRNA(fMet); mRNA recruitment can occur at any time during PIC assembly.

It is found in the plastid. The protein resides in the chloroplast. One of the essential components for the initiation of protein synthesis. Stabilizes the binding of IF-2 and IF-3 on the 30S subunit to which N-formylmethionyl-tRNA(fMet) subsequently binds. Helps modulate mRNA selection, yielding the 30S pre-initiation complex (PIC). Upon addition of the 50S ribosomal subunit IF-1, IF-2 and IF-3 are released leaving the mature 70S translation initiation complex. In Tetradesmus obliquus (Green alga), this protein is Translation initiation factor IF-1, chloroplastic.